A 210-amino-acid polypeptide reads, in one-letter code: Putative O-methyltransferase MSMEG_5073/MSMEI_4947 (210 aa).

Residues Val-37, Glu-59, 61–62 (GT), Ser-67, Asp-85, and Val-86 each bind S-adenosyl-L-methionine. Asp-133 lines the substrate pocket. S-adenosyl-L-methionine is bound at residue Asp-135.

This sequence belongs to the class I-like SAM-binding methyltransferase superfamily. Cation-dependent O-methyltransferase family.

In Mycolicibacterium smegmatis (strain ATCC 700084 / mc(2)155) (Mycobacterium smegmatis), this protein is Putative O-methyltransferase MSMEG_5073/MSMEI_4947.